A 223-amino-acid chain; its full sequence is NADH-quinone oxidoreductase subunit C (223 aa).

It belongs to the complex I 30 kDa subunit family. In terms of assembly, NDH-1 is composed of 14 different subunits. Subunits NuoB, C, D, E, F, and G constitute the peripheral sector of the complex.

The protein resides in the cell inner membrane. The catalysed reaction is a quinone + NADH + 5 H(+)(in) = a quinol + NAD(+) + 4 H(+)(out). Functionally, NDH-1 shuttles electrons from NADH, via FMN and iron-sulfur (Fe-S) centers, to quinones in the respiratory chain. The immediate electron acceptor for the enzyme in this species is believed to be ubiquinone. Couples the redox reaction to proton translocation (for every two electrons transferred, four hydrogen ions are translocated across the cytoplasmic membrane), and thus conserves the redox energy in a proton gradient. The sequence is that of NADH-quinone oxidoreductase subunit C from Hydrogenovibrio crunogenus (strain DSM 25203 / XCL-2) (Thiomicrospira crunogena).